The sequence spans 69 residues: Putative antitoxin AF_1481 (69 aa).

This sequence belongs to the UPF0330 family.

Possibly the antitoxin component of a type II toxin-antitoxin (TA) system. This Archaeoglobus fulgidus (strain ATCC 49558 / DSM 4304 / JCM 9628 / NBRC 100126 / VC-16) protein is Putative antitoxin AF_1481.